The primary structure comprises 144 residues: Transcription antitermination protein NusB (144 aa).

The protein belongs to the NusB family.

Involved in transcription antitermination. Required for transcription of ribosomal RNA (rRNA) genes. Binds specifically to the boxA antiterminator sequence of the ribosomal RNA (rrn) operons. The sequence is that of Transcription antitermination protein NusB from Paraburkholderia phytofirmans (strain DSM 17436 / LMG 22146 / PsJN) (Burkholderia phytofirmans).